The chain runs to 292 residues: MMAFAPPKNTDGPKMQTKMSTWTPLNHQLLNDRVFEERRALLGKWFDKWTDSQRRRILTGLLERCSLSQQKFCCRKLQEKIPAEALDFTTKLPRVLSLYIFSFLDPRSLCRCAQVCWHWKNLAELDQLWMLKCLRFNWYINFSPTPFEQGIWKKHYIQMVKELHITKPKTPPKDGFVIADVQLVTSNSPEEKQSPLSAFRSSSSLRKKNNSGEKALPPWRSSDKHPTDIIRFNYLDNRDPMETVQQGRRKRNQMTPDFSRQSHDKKNKLQDRTRLRKAQSMMSRRNPFPLCP.

Residues 86 to 132 (LDFTTKLPRVLSLYIFSFLDPRSLCRCAQVCWHWKNLAELDQLWMLK) form the F-box domain. Disordered regions lie at residues 188–224 (SPEE…SSDK) and 238–292 (RDPM…PLCP). A compositionally biased stretch (low complexity) spans 194-204 (SPLSAFRSSSS). The span at 260–273 (RQSHDKKNKLQDRT) shows a compositional bias: basic and acidic residues.

In terms of assembly, part of a SCF (SKP1-cullin-F-box) protein ligase complex. Expressed in heart, spleen and colon.

Its function is as follows. Probably recognizes and binds to some phosphorylated proteins and promotes their ubiquitination and degradation. This Homo sapiens (Human) protein is F-box only protein 16 (FBXO16).